The primary structure comprises 366 residues: Quinolinate synthase (366 aa).

Residues His-44 and Ser-61 each contribute to the iminosuccinate site. Residue Cys-108 participates in [4Fe-4S] cluster binding. Iminosuccinate is bound by residues 139-141 (YVN) and Ser-160. Cys-228 contributes to the [4Fe-4S] cluster binding site. Iminosuccinate contacts are provided by residues 254-256 (HPE) and Thr-271. Residue Cys-318 coordinates [4Fe-4S] cluster.

Belongs to the quinolinate synthase family. Type 3 subfamily. The cofactor is [4Fe-4S] cluster.

Its subcellular location is the cytoplasm. It catalyses the reaction iminosuccinate + dihydroxyacetone phosphate = quinolinate + phosphate + 2 H2O + H(+). It functions in the pathway cofactor biosynthesis; NAD(+) biosynthesis; quinolinate from iminoaspartate: step 1/1. Functionally, catalyzes the condensation of iminoaspartate with dihydroxyacetone phosphate to form quinolinate. This chain is Quinolinate synthase, found in Staphylococcus carnosus (strain TM300).